A 397-amino-acid chain; its full sequence is Mannonate dehydratase 2 (397 aa).

It belongs to the mannonate dehydratase family. Fe(2+) is required as a cofactor. Mn(2+) serves as cofactor.

The catalysed reaction is D-mannonate = 2-dehydro-3-deoxy-D-gluconate + H2O. Its pathway is carbohydrate metabolism; pentose and glucuronate interconversion. Functionally, catalyzes the dehydration of D-mannonate. This Agrobacterium fabrum (strain C58 / ATCC 33970) (Agrobacterium tumefaciens (strain C58)) protein is Mannonate dehydratase 2 (uxuA2).